A 300-amino-acid polypeptide reads, in one-letter code: Ribosomal RNA small subunit methyltransferase A (300 aa).

S-adenosyl-L-methionine-binding residues include asparagine 36, valine 38, glycine 63, glutamate 84, aspartate 113, and asparagine 131.

This sequence belongs to the class I-like SAM-binding methyltransferase superfamily. rRNA adenine N(6)-methyltransferase family. RsmA subfamily.

Its subcellular location is the cytoplasm. It catalyses the reaction adenosine(1518)/adenosine(1519) in 16S rRNA + 4 S-adenosyl-L-methionine = N(6)-dimethyladenosine(1518)/N(6)-dimethyladenosine(1519) in 16S rRNA + 4 S-adenosyl-L-homocysteine + 4 H(+). Specifically dimethylates two adjacent adenosines (A1518 and A1519) in the loop of a conserved hairpin near the 3'-end of 16S rRNA in the 30S particle. May play a critical role in biogenesis of 30S subunits. The protein is Ribosomal RNA small subunit methyltransferase A of Kineococcus radiotolerans (strain ATCC BAA-149 / DSM 14245 / SRS30216).